The following is a 381-amino-acid chain: Chaperone protein DnaJ (381 aa).

The J domain occupies 5–70; sequence DFYEVLGVGR…QKKAAYDQYG (66 aa). The CR-type zinc finger occupies 136 to 214; that stretch reads GCSKEIEVPT…CHGQGRKQKT (79 aa). Zn(2+) is bound by residues Cys149, Cys152, Cys166, Cys169, Cys188, Cys191, Cys202, and Cys205. 4 CXXCXGXG motif repeats span residues 149 to 156, 166 to 173, 188 to 195, and 202 to 209; these read CDACDGSG, CGTCHGHG, CPTCHGKG, and CNVCHGQG.

It belongs to the DnaJ family. Homodimer. The cofactor is Zn(2+).

The protein resides in the cytoplasm. Its function is as follows. Participates actively in the response to hyperosmotic and heat shock by preventing the aggregation of stress-denatured proteins and by disaggregating proteins, also in an autonomous, DnaK-independent fashion. Unfolded proteins bind initially to DnaJ; upon interaction with the DnaJ-bound protein, DnaK hydrolyzes its bound ATP, resulting in the formation of a stable complex. GrpE releases ADP from DnaK; ATP binding to DnaK triggers the release of the substrate protein, thus completing the reaction cycle. Several rounds of ATP-dependent interactions between DnaJ, DnaK and GrpE are required for fully efficient folding. Also involved, together with DnaK and GrpE, in the DNA replication of plasmids through activation of initiation proteins. This is Chaperone protein DnaJ from Vibrio cholerae serotype O1 (strain ATCC 39541 / Classical Ogawa 395 / O395).